The following is a 212-amino-acid chain: Thymidylate kinase (212 aa).

Position 11–18 (11–18) interacts with ATP; it reads GPDGAGKS.

The protein belongs to the thymidylate kinase family.

It catalyses the reaction dTMP + ATP = dTDP + ADP. Functionally, phosphorylation of dTMP to form dTDP in both de novo and salvage pathways of dTTP synthesis. This chain is Thymidylate kinase, found in Streptococcus gordonii (strain Challis / ATCC 35105 / BCRC 15272 / CH1 / DL1 / V288).